The primary structure comprises 338 residues: Eukaryotic translation initiation factor 3 subunit H (338 aa).

An MPN domain is found at 22 to 154 (VQCDGLAVMK…LKAYRLTPQA (133 aa)).

This sequence belongs to the eIF-3 subunit H family. Component of the eukaryotic translation initiation factor 3 (eIF-3) complex. The eIF-3 complex interacts with pix. Interacts with mxt.

Its subcellular location is the cytoplasm. Component of the eukaryotic translation initiation factor 3 (eIF-3) complex, which is involved in protein synthesis of a specialized repertoire of mRNAs and, together with other initiation factors, stimulates binding of mRNA and methionyl-tRNAi to the 40S ribosome. The eIF-3 complex specifically targets and initiates translation of a subset of mRNAs involved in cell proliferation. The polypeptide is Eukaryotic translation initiation factor 3 subunit H (Drosophila erecta (Fruit fly)).